A 376-amino-acid chain; its full sequence is Transcription initiation factor IIA subunit 1 (376 aa).

An N-acetylalanine modification is found at A2. Low complexity-rich tracts occupy residues 69–79 (QVQQQHQPQQQ) and 89–105 (QAQP…TQQV). 3 disordered regions span residues 69–107 (QVQQ…QVLI), 247–266 (QAQI…AQTQ), and 274–329 (DGTG…QELF). Phosphoserine; by TAF1 is present on residues S280, S281, S316, and S321. Over residues 280–329 (SSEEDEDEEEDYDDDEEEDKEKDGAEDGQVEEEPLNSEDDVSDEEGQELF) the composition is skewed to acidic residues. DNA is bound by residues H343 and R344.

It belongs to the TFIIA subunit 1 family. TFIIA is a heterodimer of the large unprocessed subunit 1 and a small subunit gamma. It was originally believed to be a heterotrimer of an alpha (p35), a beta (p19) and a gamma subunit (p12). TFIIA forms a complex with TBP. Part of TBP-based Pol II pre-initiation complex (PIC), in which Pol II core assembles with general transcription factors and other specific initiation factors including GTF2E1, GTF2E2, GTF2F1, GTF2F2, TCEA1, ERCC2, ERCC3, GTF2H2, GTF2H3, GTF2H4, GTF2H5, GTF2A1, GTF2A2, GTF2B and TBP; this large multi-subunit PIC complex mediates DNA unwinding and targets Pol II core to the transcription start site where the first phosphodiester bond forms. Post-translationally, the alpha and beta subunits are postranslationally produced from the precursor form by TASP1. The cleavage promotes proteasomal degradation.

Its subcellular location is the nucleus. Functionally, TFIIA is a component of the transcription machinery of RNA polymerase II and plays an important role in transcriptional activation. TFIIA in a complex with TBP mediates transcriptional activity. The polypeptide is Transcription initiation factor IIA subunit 1 (GTF2A1) (Homo sapiens (Human)).